Consider the following 92-residue polypeptide: Large ribosomal subunit protein bL27 (92 aa).

Positions 1–9 are excised as a propeptide; sequence MLVMNLQYF.

This sequence belongs to the bacterial ribosomal protein bL27 family. In terms of processing, the N-terminus is cleaved by ribosomal processing cysteine protease Prp.

In Heliobacterium modesticaldum (strain ATCC 51547 / Ice1), this protein is Large ribosomal subunit protein bL27.